A 182-amino-acid chain; its full sequence is Large ribosomal subunit protein uL6 (182 aa).

The protein belongs to the universal ribosomal protein uL6 family. Part of the 50S ribosomal subunit.

Its function is as follows. This protein binds to the 23S rRNA, and is important in its secondary structure. It is located near the subunit interface in the base of the L7/L12 stalk, and near the tRNA binding site of the peptidyltransferase center. The polypeptide is Large ribosomal subunit protein uL6 (Methanococcus maripaludis (strain C6 / ATCC BAA-1332)).